The sequence spans 251 residues: Triosephosphate isomerase (251 aa).

Residue 12–14 coordinates substrate; the sequence is NWK. H98 acts as the Electrophile in catalysis. Residue E168 is the Proton acceptor of the active site. Substrate-binding positions include G174, S213, and 234–235; that span reads GG.

This sequence belongs to the triosephosphate isomerase family. As to quaternary structure, homodimer.

It localises to the cytoplasm. It catalyses the reaction D-glyceraldehyde 3-phosphate = dihydroxyacetone phosphate. Its pathway is carbohydrate biosynthesis; gluconeogenesis. It functions in the pathway carbohydrate degradation; glycolysis; D-glyceraldehyde 3-phosphate from glycerone phosphate: step 1/1. In terms of biological role, involved in the gluconeogenesis. Catalyzes stereospecifically the conversion of dihydroxyacetone phosphate (DHAP) to D-glyceraldehyde-3-phosphate (G3P). This is Triosephosphate isomerase from Afipia carboxidovorans (strain ATCC 49405 / DSM 1227 / KCTC 32145 / OM5) (Oligotropha carboxidovorans).